The primary structure comprises 252 residues: Triosephosphate isomerase (252 aa).

10–12 (NWK) provides a ligand contact to substrate. Catalysis depends on His96, which acts as the Electrophile. Glu168 (proton acceptor) is an active-site residue. Residues Gly174, Ser214, and 235-236 (GG) contribute to the substrate site.

Belongs to the triosephosphate isomerase family. As to quaternary structure, homodimer.

The protein resides in the cytoplasm. It catalyses the reaction D-glyceraldehyde 3-phosphate = dihydroxyacetone phosphate. It participates in carbohydrate biosynthesis; gluconeogenesis. It functions in the pathway carbohydrate degradation; glycolysis; D-glyceraldehyde 3-phosphate from glycerone phosphate: step 1/1. Involved in the gluconeogenesis. Catalyzes stereospecifically the conversion of dihydroxyacetone phosphate (DHAP) to D-glyceraldehyde-3-phosphate (G3P). This chain is Triosephosphate isomerase, found in Streptococcus pyogenes serotype M5 (strain Manfredo).